A 432-amino-acid polypeptide reads, in one-letter code: 3-phosphoshikimate 1-carboxyvinyltransferase (432 aa).

K22, S23, and R27 together coordinate 3-phosphoshikimate. A phosphoenolpyruvate-binding site is contributed by K22. Phosphoenolpyruvate-binding residues include G96 and R127. S173, S174, Q175, S201, D316, N339, and K343 together coordinate 3-phosphoshikimate. A phosphoenolpyruvate-binding site is contributed by Q175. Residue D316 is the Proton acceptor of the active site. Residues R347, R391, and K416 each contribute to the phosphoenolpyruvate site.

The protein belongs to the EPSP synthase family. In terms of assembly, monomer.

It is found in the cytoplasm. The catalysed reaction is 3-phosphoshikimate + phosphoenolpyruvate = 5-O-(1-carboxyvinyl)-3-phosphoshikimate + phosphate. The protein operates within metabolic intermediate biosynthesis; chorismate biosynthesis; chorismate from D-erythrose 4-phosphate and phosphoenolpyruvate: step 6/7. Catalyzes the transfer of the enolpyruvyl moiety of phosphoenolpyruvate (PEP) to the 5-hydroxyl of shikimate-3-phosphate (S3P) to produce enolpyruvyl shikimate-3-phosphate and inorganic phosphate. This Haemophilus influenzae (strain ATCC 51907 / DSM 11121 / KW20 / Rd) protein is 3-phosphoshikimate 1-carboxyvinyltransferase.